We begin with the raw amino-acid sequence, 313 residues long: UPF0761 membrane protein VV1_0885 (313 aa).

Helical transmembrane passes span 41–61, 104–124, 139–159, 185–205, 215–235, and 249–269; these read YLAY…LSIL, MTAV…SNID, AVFS…LVGA, LLRW…YLLV, AVVG…GFAA, and ALAA…IVLI. The segment at 294–313 is disordered; the sequence is PNNDTELEKDTQRDRFDSES. Residues 299–313 show a composition bias toward basic and acidic residues; that stretch reads ELEKDTQRDRFDSES.

Belongs to the UPF0761 family.

The protein localises to the cell inner membrane. This Vibrio vulnificus (strain CMCP6) protein is UPF0761 membrane protein VV1_0885.